We begin with the raw amino-acid sequence, 294 residues long: Acetylglutamate kinase (294 aa).

Residues 67-68, R89, and N193 each bind substrate; that span reads GG.

The protein belongs to the acetylglutamate kinase family. ArgB subfamily.

Its subcellular location is the cytoplasm. The enzyme catalyses N-acetyl-L-glutamate + ATP = N-acetyl-L-glutamyl 5-phosphate + ADP. It participates in amino-acid biosynthesis; L-arginine biosynthesis; N(2)-acetyl-L-ornithine from L-glutamate: step 2/4. Its function is as follows. Catalyzes the ATP-dependent phosphorylation of N-acetyl-L-glutamate. This Leptospira interrogans serogroup Icterohaemorrhagiae serovar copenhageni (strain Fiocruz L1-130) protein is Acetylglutamate kinase.